The chain runs to 285 residues: Bifunctional protein FolD (285 aa).

NADP(+)-binding positions include 166-168 and isoleucine 232; that span reads GAS.

The protein belongs to the tetrahydrofolate dehydrogenase/cyclohydrolase family. Homodimer.

It carries out the reaction (6R)-5,10-methylene-5,6,7,8-tetrahydrofolate + NADP(+) = (6R)-5,10-methenyltetrahydrofolate + NADPH. It catalyses the reaction (6R)-5,10-methenyltetrahydrofolate + H2O = (6R)-10-formyltetrahydrofolate + H(+). The protein operates within one-carbon metabolism; tetrahydrofolate interconversion. Functionally, catalyzes the oxidation of 5,10-methylenetetrahydrofolate to 5,10-methenyltetrahydrofolate and then the hydrolysis of 5,10-methenyltetrahydrofolate to 10-formyltetrahydrofolate. This is Bifunctional protein FolD from Aliivibrio fischeri (strain MJ11) (Vibrio fischeri).